A 29-amino-acid polypeptide reads, in one-letter code: Cytochrome c oxidase subunit 7A2, mitochondrial (29 aa).

Lysine 10 carries the post-translational modification N6-acetyllysine.

The protein belongs to the cytochrome c oxidase VIIa family. In terms of assembly, component of the cytochrome c oxidase (complex IV, CIV), a multisubunit enzyme composed of 14 subunits. The complex is composed of a catalytic core of 3 subunits MT-CO1, MT-CO2 and MT-CO3, encoded in the mitochondrial DNA, and 11 supernumerary subunits COX4I, COX5A, COX5B, COX6A, COX6B, COX6C, COX7A, COX7B, COX7C, COX8 and NDUFA4, which are encoded in the nuclear genome. The complex exists as a monomer or a dimer and forms supercomplexes (SCs) in the inner mitochondrial membrane with NADH-ubiquinone oxidoreductase (complex I, CI) and ubiquinol-cytochrome c oxidoreductase (cytochrome b-c1 complex, complex III, CIII), resulting in different assemblies (supercomplex SCI(1)III(2)IV(1) and megacomplex MCI(2)III(2)IV(2)). Interacts with PET100.

Its subcellular location is the mitochondrion inner membrane. The protein operates within energy metabolism; oxidative phosphorylation. Component of the cytochrome c oxidase, the last enzyme in the mitochondrial electron transport chain which drives oxidative phosphorylation. The respiratory chain contains 3 multisubunit complexes succinate dehydrogenase (complex II, CII), ubiquinol-cytochrome c oxidoreductase (cytochrome b-c1 complex, complex III, CIII) and cytochrome c oxidase (complex IV, CIV), that cooperate to transfer electrons derived from NADH and succinate to molecular oxygen, creating an electrochemical gradient over the inner membrane that drives transmembrane transport and the ATP synthase. Cytochrome c oxidase is the component of the respiratory chain that catalyzes the reduction of oxygen to water. Electrons originating from reduced cytochrome c in the intermembrane space (IMS) are transferred via the dinuclear copper A center (CU(A)) of subunit 2 and heme A of subunit 1 to the active site in subunit 1, a binuclear center (BNC) formed by heme A3 and copper B (CU(B)). The BNC reduces molecular oxygen to 2 water molecules using 4 electrons from cytochrome c in the IMS and 4 protons from the mitochondrial matrix. The polypeptide is Cytochrome c oxidase subunit 7A2, mitochondrial (COX7A2) (Canis lupus familiaris (Dog)).